We begin with the raw amino-acid sequence, 721 residues long: Protein mu-NS (721 aa).

An interaction with sigma-NS region spans residues 1–13; the sequence is MASFKGFSANTVP. Residues 1–38 are RNA-binding; that stretch reads MASFKGFSANTVPVSKAKRDISSLAATPGLRSQSFTPS. Residues 14-40 are interaction with mu-2; that stretch reads VSKAKRDISSLAATPGLRSQSFTPSVD. The tract at residues 471–721 is involved in the formation of factory-like inclusions; sequence SNDVTDGIKL…IDFSVPTDEL (251 aa). 2 coiled-coil regions span residues 522 to 559 and 628 to 684; these read PLLS…KSAQ and LMNG…ALNQ.

The protein belongs to the orthoreovirus mu-NS protein family. As to quaternary structure, interacts with mu-2. Interacts with sigma-NS; in viral factories. Interacts with the inner capsid proteins lambda-1 and sigma-2, and outer capsid protein lambda-2; in viral factories. The N-terminus is blocked.

It localises to the host cytoplasm. Its function is as follows. Non-structural protein implicated with protein sigma-NS in forming the matrix of viral factories, which are large inclusions in the host cytoplasm where replication intermediates are assembled and viral RNA replication takes place. Together with mu-2, recruits the other core proteins to these factories. Binds RNA and recruits viral mRNAs to sites of viral replication. The sequence is that of Protein mu-NS (M3) from Reovirus type 3 (strain Dearing) (T3D).